A 309-amino-acid polypeptide reads, in one-letter code: MITFLPIIFSILVVVTFVIGNFANGFIALVNSTEWVKRQKISFADQILTALAVSRVGLLWVLLLNWYATVLNPAFYSVEVRTTTYNVWAVTNHFSNWLATSLSIFYLLKIANFSNLIFLHLKRRVKNVILVMLLGPLLILACHLFMVNMNEIVRTKEYEENMTWKYILRNAIYHPGMTVTTLQNLVPFTLTLISFLLLICSLCKHLKKMQLHGKGPQDPSTKVHIKALQIVISFLLLCVIYFVSVIISIWSFESLGNKPVFMFCQAIRFSYPSAHPFIVIWGNKKLKQTFLSVLWNVRYWVKGQKPSSL.

Topologically, residues 1–2 are extracellular; it reads MI. Residues 3 to 23 traverse the membrane as a helical segment; it reads TFLPIIFSILVVVTFVIGNFA. The Cytoplasmic segment spans residues 24 to 55; sequence NGFIALVNSTEWVKRQKISFADQILTALAVSR. A helical transmembrane segment spans residues 56-76; that stretch reads VGLLWVLLLNWYATVLNPAFY. Residues 77-100 lie on the Extracellular side of the membrane; sequence SVEVRTTTYNVWAVTNHFSNWLAT. Residues 101-121 traverse the membrane as a helical segment; sequence SLSIFYLLKIANFSNLIFLHL. Over 122 to 126 the chain is Cytoplasmic; it reads KRRVK. A helical membrane pass occupies residues 127 to 147; that stretch reads NVILVMLLGPLLILACHLFMV. Topologically, residues 148 to 181 are extracellular; the sequence is NMNEIVRTKEYEENMTWKYILRNAIYHPGMTVTT. Residue Asn161 is glycosylated (N-linked (GlcNAc...) asparagine). A helical transmembrane segment spans residues 182 to 202; sequence LQNLVPFTLTLISFLLLICSL. Residues 203–229 lie on the Cytoplasmic side of the membrane; sequence CKHLKKMQLHGKGPQDPSTKVHIKALQ. Residues 230-250 traverse the membrane as a helical segment; the sequence is IVISFLLLCVIYFVSVIISIW. The Extracellular segment spans residues 251-259; that stretch reads SFESLGNKP. The chain crosses the membrane as a helical span at residues 260–280; the sequence is VFMFCQAIRFSYPSAHPFIVI. Topologically, residues 281–309 are cytoplasmic; the sequence is WGNKKLKQTFLSVLWNVRYWVKGQKPSSL.

It belongs to the G-protein coupled receptor T2R family.

The protein resides in the membrane. In terms of biological role, receptor that may play a role in the perception of bitterness and is gustducin-linked. May play a role in sensing the chemical composition of the gastrointestinal content. The activity of this receptor may stimulate alpha gustducin, mediate PLC-beta-2 activation and lead to the gating of TRPM5. The protein is Taste receptor type 2 member 31 (TAS2R31) of Papio hamadryas (Hamadryas baboon).